The primary structure comprises 871 residues: Coatomer subunit gamma-2 (871 aa).

The segment covering 1–11 (MIKKFDKKDEE) has biased composition (basic and acidic residues). Residues 1 to 20 (MIKKFDKKDEESGSGSNPFR) form a disordered region. HEAT repeat units lie at residues 64-101 (TEAT…ISED), 283-320 (RELA…KHPS), 321-355 (AVTA…GSES), 356-392 (SVDR…KYPR), 395-430 (SVMM…ENPE), and 467-504 (PVPS…QNEN). At threonine 594 the chain carries Phosphothreonine.

Belongs to the COPG family. In terms of assembly, oligomeric complex. Binds to CDC42. Interacts with JAGN1. Interacts with TMED10 (via cytoplasmic domain).

The protein resides in the cytoplasm. It localises to the cytosol. Its subcellular location is the golgi apparatus membrane. The protein localises to the cytoplasmic vesicle. It is found in the COPI-coated vesicle membrane. The coatomer is a cytosolic protein complex that binds to dilysine motifs and reversibly associates with Golgi non-clathrin-coated vesicles, which further mediate biosynthetic protein transport from the ER, via the Golgi up to the trans Golgi network. Coatomer complex is required for budding from Golgi membranes, and is essential for the retrograde Golgi-to-ER transport of dilysine-tagged proteins. In mammals, the coatomer can only be recruited by membranes associated to ADP-ribosylation factors (ARFs), which are small GTP-binding proteins; the complex also influences the Golgi structural integrity, as well as the processing, activity, and endocytic recycling of LDL receptors. The chain is Coatomer subunit gamma-2 (COPG2) from Bos taurus (Bovine).